The sequence spans 254 residues: NAD kinase (254 aa).

D44 serves as the catalytic Proton acceptor. Residues 44-45, 114-115, D144, A152, 155-160, and A179 contribute to the NAD(+) site; these read DG, NE, and TAYNYS.

The protein belongs to the NAD kinase family. A divalent metal cation serves as cofactor.

It localises to the cytoplasm. It carries out the reaction NAD(+) + ATP = ADP + NADP(+) + H(+). Its function is as follows. Involved in the regulation of the intracellular balance of NAD and NADP, and is a key enzyme in the biosynthesis of NADP. Catalyzes specifically the phosphorylation on 2'-hydroxyl of the adenosine moiety of NAD to yield NADP. The sequence is that of NAD kinase from Cereibacter sphaeroides (strain ATCC 17023 / DSM 158 / JCM 6121 / CCUG 31486 / LMG 2827 / NBRC 12203 / NCIMB 8253 / ATH 2.4.1.) (Rhodobacter sphaeroides).